The primary structure comprises 735 residues: Muskelin (735 aa).

N-acetylalanine is present on alanine 2. The LisH domain maps to 172-204 (REQEAIRLCLKHFRQHNYTEAFESLQKKTKIAL). In terms of domain architecture, CTLH spans 206–258 (HPMLTDIHDKLVLKGDFDACEELIEKAVNDGLFNQYISQQEYKPRWSQIIPKS). Kelch repeat units follow at residues 284–330 (TVYL…SCHK), 339–391 (QIYT…FDHQ), 408–458 (ILTC…SRIG), 469–515 (CLYV…TGFT), 526–578 (EIHV…SLQE), and 597–651 (VHYL…AQVD).

In terms of assembly, homodimer; may form higher oligomers. Identified in the CTLH complex that contains GID4, RANBP9 and/or RANBP10, MKLN1, MAEA, RMND5A (or alternatively its paralog RMND5B), GID8, ARMC8, WDR26 and YPEL5. Within this complex, MAEA, RMND5A (or alternatively its paralog RMND5B), GID8, WDR26, and RANBP9 and/or RANBP10 form the catalytic core, while GID4, MKLN1, ARMC8 and YPEL5 have ancillary roles. Interacts with RANBP9. Part of a complex consisting of RANBP9, MKLN1 and GID8. Interacts with GABRA1. Interacts with the C-terminal tail of PTGER3.

It localises to the cytoplasm. It is found in the cytosol. The protein resides in the nucleus. The protein localises to the nucleoplasm. Its subcellular location is the cell projection. It localises to the ruffle. It is found in the cell cortex. The protein resides in the synapse. The protein localises to the postsynapse. Component of the CTLH E3 ubiquitin-protein ligase complex that selectively accepts ubiquitin from UBE2H and mediates ubiquitination and subsequent proteasomal degradation of the transcription factor HBP1. Required for internalization of the GABA receptor GABRA1 from the cell membrane via endosomes and subsequent GABRA1 degradation. Acts as a mediator of cell spreading and cytoskeletal responses to the extracellular matrix component THBS1. In Homo sapiens (Human), this protein is Muskelin (MKLN1).